The following is a 352-amino-acid chain: RNA-binding protein lark (352 aa).

2 RRM domains span residues 7–77 (FKLF…AAKS) and 86–156 (TKIF…VSTS). The CCHC-type zinc finger occupies 168–185 (EQCYRCGRSGHWSKECPR). Disordered stretches follow at residues 187–228 (YGSA…LRDR) and 254–352 (YQTS…YAPY). A phosphoserine mark is found at Ser-198 and Ser-201. 2 stretches are compositionally biased toward pro residues: residues 214-224 (PYPPPPPPPPF) and 262-277 (FPPPPISRREPMPLPP). Residues 279–288 (LSGSLRSCSV) show a composition bias toward polar residues. Phosphoserine occurs at positions 315 and 325. A compositionally biased stretch (basic and acidic residues) spans 320 to 334 (GYEDFSRDAFDERMI).

Expressed in the CNS and in CCAP neurons of the ventral nervous system (VNS), which control insect ecdysis.

The protein resides in the cytoplasm. Its subcellular location is the nucleus. Its function is as follows. Essential RNA-binding protein. May be required for circadian repression of eclosion. Also essential for nurse cell dumping during oogenesis, the process whereby the cytoplasmic contents of nurse cells are transferred to the oocyte late in it's development. The polypeptide is RNA-binding protein lark (lark) (Drosophila melanogaster (Fruit fly)).